The primary structure comprises 339 residues: Methylthioribose-1-phosphate isomerase (339 aa).

Substrate contacts are provided by residues arginine 52–alanine 54, arginine 89, and glutamine 188. Residue aspartate 229 is the Proton donor of the active site. Asparagine 239 to lysine 240 provides a ligand contact to substrate.

The protein belongs to the eIF-2B alpha/beta/delta subunits family. MtnA subfamily.

The catalysed reaction is 5-(methylsulfanyl)-alpha-D-ribose 1-phosphate = 5-(methylsulfanyl)-D-ribulose 1-phosphate. The protein operates within amino-acid biosynthesis; L-methionine biosynthesis via salvage pathway; L-methionine from S-methyl-5-thio-alpha-D-ribose 1-phosphate: step 1/6. In terms of biological role, catalyzes the interconversion of methylthioribose-1-phosphate (MTR-1-P) into methylthioribulose-1-phosphate (MTRu-1-P). This is Methylthioribose-1-phosphate isomerase from Anaeromyxobacter dehalogenans (strain 2CP-C).